A 41-amino-acid chain; its full sequence is Large ribosomal subunit protein bL36 (41 aa).

Belongs to the bacterial ribosomal protein bL36 family.

This Maricaulis maris (strain MCS10) (Caulobacter maris) protein is Large ribosomal subunit protein bL36.